Here is a 98-residue protein sequence, read N- to C-terminus: NADH-ubiquinone oxidoreductase chain 4L (98 aa).

The next 3 helical transmembrane spans lie at 1–21, 29–49, and 61–81; these read MSLV…GLLM, SLLC…LIIL, and IILL…LVMV.

The protein belongs to the complex I subunit 4L family. Core subunit of respiratory chain NADH dehydrogenase (Complex I) which is composed of 45 different subunits.

It is found in the mitochondrion inner membrane. The enzyme catalyses a ubiquinone + NADH + 5 H(+)(in) = a ubiquinol + NAD(+) + 4 H(+)(out). In terms of biological role, core subunit of the mitochondrial membrane respiratory chain NADH dehydrogenase (Complex I) which catalyzes electron transfer from NADH through the respiratory chain, using ubiquinone as an electron acceptor. Part of the enzyme membrane arm which is embedded in the lipid bilayer and involved in proton translocation. The polypeptide is NADH-ubiquinone oxidoreductase chain 4L (MT-ND4L) (Hippopotamus amphibius (Hippopotamus)).